The primary structure comprises 134 residues: uncharacterized protein (134 aa).

This is an uncharacterized protein from Human cytomegalovirus (strain AD169) (HHV-5).